Consider the following 237-residue polypeptide: MSNAYKRVLLKLSGEALMGDDAFGINRATIERMVADIAEVVRLGTQLAVVIGGGNIFRGVAGGAAGMDRATADYMGMLATMMNALALQDAMRHAGIEARVQSALRMDQVVEPYIRPRAIRQLEEGRVVIFAAGTGNPFFTTDTAAALRGSEVGAEVVLKATKVDGVYSADPKKDPSATRYTTITFDEAISRNLQVMDATAFALCRDQKLPIRVFSINKPGALKRIVLGEDEGTLVHV.

Lys11–Gly14 contacts ATP. Gly53 is a UMP binding site. 2 residues coordinate ATP: Gly54 and Arg58. UMP-binding positions include Asp73 and Thr134–Thr141. ATP-binding residues include Thr161, Tyr167, and Asp170.

Belongs to the UMP kinase family. As to quaternary structure, homohexamer.

The protein resides in the cytoplasm. The enzyme catalyses UMP + ATP = UDP + ADP. The protein operates within pyrimidine metabolism; CTP biosynthesis via de novo pathway; UDP from UMP (UMPK route): step 1/1. Its activity is regulated as follows. Inhibited by UTP. Its function is as follows. Catalyzes the reversible phosphorylation of UMP to UDP. The protein is Uridylate kinase of Burkholderia lata (strain ATCC 17760 / DSM 23089 / LMG 22485 / NCIMB 9086 / R18194 / 383).